The primary structure comprises 673 residues: UvrABC system protein B (673 aa).

A Helicase ATP-binding domain is found at 26–183; the sequence is ANFEAGLAKQ…RHLTDLQYTR (158 aa). 39 to 46 provides a ligand contact to ATP; sequence GVTGSGKT. Positions 92 to 115 match the Beta-hairpin motif; it reads YYDYYQPEAYVPSSDTFIEKDSSI. Residues 431–597 enclose the Helicase C-terminal domain; sequence QVDDLMSEIH…SVERPISDIM (167 aa). A disordered region spans residues 601–631; the sequence is REDAAEKKSGKGRSKSRQVAEETPDYRAMKP. A compositionally biased stretch (basic and acidic residues) spans 618-630; it reads QVAEETPDYRAMK. Residues 635–670 enclose the UVR domain; sequence AGKLKSLEQKMYQHAKDLEFEAAAQIRDQIQKLKTA.

This sequence belongs to the UvrB family. As to quaternary structure, forms a heterotetramer with UvrA during the search for lesions. Interacts with UvrC in an incision complex.

It localises to the cytoplasm. The UvrABC repair system catalyzes the recognition and processing of DNA lesions. A damage recognition complex composed of 2 UvrA and 2 UvrB subunits scans DNA for abnormalities. Upon binding of the UvrA(2)B(2) complex to a putative damaged site, the DNA wraps around one UvrB monomer. DNA wrap is dependent on ATP binding by UvrB and probably causes local melting of the DNA helix, facilitating insertion of UvrB beta-hairpin between the DNA strands. Then UvrB probes one DNA strand for the presence of a lesion. If a lesion is found the UvrA subunits dissociate and the UvrB-DNA preincision complex is formed. This complex is subsequently bound by UvrC and the second UvrB is released. If no lesion is found, the DNA wraps around the other UvrB subunit that will check the other stand for damage. This is UvrABC system protein B from Xanthomonas oryzae pv. oryzae (strain MAFF 311018).